Consider the following 271-residue polypeptide: MVVAKKSLGQHFLTDESFLDRIVDALPPLNPLKLVEIGVGLGDLTLKLLDRYPLKTYEIDSSLCEKMRSKLKVQKKPFKLELVEKDALFLKEEEPYFLISNLPYYIATRLVLNALKDPKCRGLLVMTQKEVALKFCAKDSQNALSVLAHAIGNATLLFDVPPSAFSPPPKVFSSVFEVIKESLKEKALASLAQVPFFEEALQKGFETLEDFLKACFSSPRKTLSNNLKKSVSYKEKLDKVLDFLALENQPTSVRASEIKDYLKLLNYLLKG.

Residues histidine 11, leucine 13, glycine 38, glutamate 58, aspartate 86, and asparagine 101 each coordinate S-adenosyl-L-methionine.

It belongs to the class I-like SAM-binding methyltransferase superfamily. rRNA adenine N(6)-methyltransferase family. RsmA subfamily.

The protein resides in the cytoplasm. It catalyses the reaction adenosine(1518)/adenosine(1519) in 16S rRNA + 4 S-adenosyl-L-methionine = N(6)-dimethyladenosine(1518)/N(6)-dimethyladenosine(1519) in 16S rRNA + 4 S-adenosyl-L-homocysteine + 4 H(+). Specifically dimethylates two adjacent adenosines (A1518 and A1519) in the loop of a conserved hairpin near the 3'-end of 16S rRNA in the 30S particle. May play a critical role in biogenesis of 30S subunits. The sequence is that of Ribosomal RNA small subunit methyltransferase A from Helicobacter pylori (strain HPAG1).